Reading from the N-terminus, the 519-residue chain is Na(+)/H(+) exchange regulatory cofactor NHE-RF3 (519 aa).

One can recognise a PDZ 1 domain in the interval 9–90 (ECKLSKQEGQ…SVTLLVLDGD (82 aa)). Phosphoserine is present on residues Ser108, Ser148, Ser192, Ser250, Ser334, and Ser348. PDZ domains follow at residues 128–215 (EPCA…VDKE) and 243–323 (VVVI…LDKE). The segment at 348–374 (SVKEGPAPIPAPLEATGSEPTEDAEGH) is disordered. In terms of domain architecture, PDZ 4 spans 378 to 458 (LCRLLKEDDS…HVTLLVCGKM (81 aa)). Thr451 and Thr488 each carry phosphothreonine. Positions 479–519 (VAGPDEKGETSAESEHDAHPAKDRTLSTASHSSSNSEDTEM) are disordered. Residues 482-503 (PDEKGETSAESEHDAHPAKDRT) show a composition bias toward basic and acidic residues. Ser489 and Ser492 each carry phosphoserine. Position 503 is a phosphothreonine (Thr503). Positions 505 to 519 (STASHSSSNSEDTEM) are enriched in low complexity. Phosphoserine occurs at positions 508, 510, 511, 512, and 514.

It belongs to the NHER family. In terms of assembly, interacts with PDZK1IP1 and ABCC2. Binds to the C-terminal region of SLC26A3. Interacts (via C-terminal PDZ domain) with SLC26A6 (via C-terminal domain). Interacts (via C-terminal PDZ domain) with SLC9A3 (via C-terminal domain). Component of a complex, composed of PDZK1, SYNGAP1, KLHL17 and NMDA receptors. Interacts (via PDZ1 domain) directly with KLHL17; the interaction is important for integrity of actin cytoskeleton structures in neurons. Forms a heterodimeric complex with NHERF1. Interacts with AKAP2, BCR, CFTR, SLCO1A1, SLC22A12, SLC22A4, SLC22A5, SLC26A6, NHERF2 and SLC17A1. Interacts (via the first PDZ domain) with PTGIR (via non-isoprenylated C-terminus). Interacts (via PDZ domains 1 and 3) with SCARB1 (C-terminal domain). Interacts (via PDZ domains 1 and 3) with SLC5A8 (via PDZ-binding motif); interaction increases nicotinate transport activity of SLC5A8. In terms of tissue distribution, expressed in kidney, liver, small intestine. brain, lung, and testis (at protein level).

It is found in the membrane. The protein resides in the cell membrane. Its function is as follows. A scaffold protein that connects plasma membrane proteins and regulatory components, regulating their surface expression in epithelial cells apical domains. May be involved in the coordination of a diverse range of regulatory processes for ion transport and second messenger cascades. In complex with NHERF1, may cluster proteins that are functionally dependent in a mutual fashion and modulate the trafficking and the activity of the associated membrane proteins. May play a role in the cellular mechanisms associated with multidrug resistance through its interaction with ABCC2 and PDZK1IP1. May potentiate the CFTR chloride channel activity. Required for normal cell-surface expression of SCARB1. Plays a role in maintaining normal plasma cholesterol levels via its effects on SCARB1. Plays a role in the normal localization and function of the chloride-anion exchanger SLC26A6 to the plasma membrane in the brush border of the proximal tubule of the kidney. May be involved in the regulation of proximal tubular Na(+)-dependent inorganic phosphate cotransport therefore playing an important role in tubule function. The protein is Na(+)/H(+) exchange regulatory cofactor NHE-RF3 (Pdzk1) of Mus musculus (Mouse).